We begin with the raw amino-acid sequence, 374 residues long: Queuine tRNA-ribosyltransferase (374 aa).

The active-site Proton acceptor is the D89. Residues D89–F93, D143, Q187, and G214 contribute to the substrate site. Residues G245–D251 form an RNA binding region. D264 acts as the Nucleophile in catalysis. The RNA binding; important for wobble base 34 recognition stretch occupies residues T269 to R273. Zn(2+) is bound by residues C302, C304, C307, and H333.

This sequence belongs to the queuine tRNA-ribosyltransferase family. As to quaternary structure, homodimer. Within each dimer, one monomer is responsible for RNA recognition and catalysis, while the other monomer binds to the replacement base PreQ1. The cofactor is Zn(2+).

It catalyses the reaction 7-aminomethyl-7-carbaguanine + guanosine(34) in tRNA = 7-aminomethyl-7-carbaguanosine(34) in tRNA + guanine. The protein operates within tRNA modification; tRNA-queuosine biosynthesis. Functionally, catalyzes the base-exchange of a guanine (G) residue with the queuine precursor 7-aminomethyl-7-deazaguanine (PreQ1) at position 34 (anticodon wobble position) in tRNAs with GU(N) anticodons (tRNA-Asp, -Asn, -His and -Tyr). Catalysis occurs through a double-displacement mechanism. The nucleophile active site attacks the C1' of nucleotide 34 to detach the guanine base from the RNA, forming a covalent enzyme-RNA intermediate. The proton acceptor active site deprotonates the incoming PreQ1, allowing a nucleophilic attack on the C1' of the ribose to form the product. After dissociation, two additional enzymatic reactions on the tRNA convert PreQ1 to queuine (Q), resulting in the hypermodified nucleoside queuosine (7-(((4,5-cis-dihydroxy-2-cyclopenten-1-yl)amino)methyl)-7-deazaguanosine). The chain is Queuine tRNA-ribosyltransferase from Shewanella loihica (strain ATCC BAA-1088 / PV-4).